A 274-amino-acid polypeptide reads, in one-letter code: Kit ligand (274 aa).

Residues 1-25 (MKKTQTWIITCIYLQLLLFNPLVKT) form the signal peptide. At 26–215 (KGICENRVTD…SNFTGDSNLQ (190 aa)) the chain is on the extracellular side. 2 cysteine pairs are disulfide-bonded: cysteine 29-cysteine 114 and cysteine 68-cysteine 164. N-linked (GlcNAc...) asparagine glycosylation is found at asparagine 90, asparagine 97, asparagine 145, asparagine 196, and asparagine 207. The chain crosses the membrane as a helical span at residues 216 to 238 (WAAMALPAFFSLVIGFAFGALYW). Residues 239–274 (KKKQPNLTRAVENIQINEEDNEISMLQEKEREFQEV) are Cytoplasmic-facing.

This sequence belongs to the SCF family. As to quaternary structure, homodimer, non-covalently linked. Post-translationally, a soluble form is produced by proteolytic processing of the extracellular domain.

The protein resides in the cytoplasm. It is found in the cytoskeleton. The protein localises to the cell membrane. It localises to the cell projection. Its subcellular location is the lamellipodium. The protein resides in the filopodium. It is found in the secreted. Functionally, stimulates the proliferation of mast cells. Able to augment the proliferation of both myeloid and lymphoid hematopoietic progenitors in bone marrow culture. Also mediates cell-cell adhesion. Acts synergistically with other cytokines, probably interleukins. This Equus caballus (Horse) protein is Kit ligand (KITLG).